A 73-amino-acid chain; its full sequence is Translation initiation factor IF-1 (73 aa).

Residues 1 to 73 form the S1-like domain; that stretch reads MPKKDGAIEI…SRGRIVYRYK (73 aa).

Belongs to the IF-1 family. In terms of assembly, component of the 30S ribosomal translation pre-initiation complex which assembles on the 30S ribosome in the order IF-2 and IF-3, IF-1 and N-formylmethionyl-tRNA(fMet); mRNA recruitment can occur at any time during PIC assembly.

It localises to the cytoplasm. Functionally, one of the essential components for the initiation of protein synthesis. Stabilizes the binding of IF-2 and IF-3 on the 30S subunit to which N-formylmethionyl-tRNA(fMet) subsequently binds. Helps modulate mRNA selection, yielding the 30S pre-initiation complex (PIC). Upon addition of the 50S ribosomal subunit IF-1, IF-2 and IF-3 are released leaving the mature 70S translation initiation complex. This chain is Translation initiation factor IF-1, found in Frankia alni (strain DSM 45986 / CECT 9034 / ACN14a).